The sequence spans 44 residues: Protein PsbN (44 aa).

Residues phenylalanine 6–valine 26 form a helical membrane-spanning segment.

The protein belongs to the PsbN family.

The protein resides in the plastid. It is found in the chloroplast thylakoid membrane. Functionally, may play a role in photosystem I and II biogenesis. In Tetradesmus obliquus (Green alga), this protein is Protein PsbN.